A 1128-amino-acid polypeptide reads, in one-letter code: Probable serine/threonine-protein kinase DDB_G0283337 (1128 aa).

The segment covering 1 to 17 (MENNNNNNINKTNTPNN) has biased composition (low complexity). Disordered stretches follow at residues 1-21 (MENN…SFSP), 60-100 (INHN…NNNN), 131-151 (RESN…NNSN), 236-256 (NNSK…SNSN), and 375-504 (NDNE…NSEQ). 2 stretches are compositionally biased toward low complexity: residues 243–256 (NSSN…SNSN) and 375–502 (NDNE…NNNS). One can recognise a Protein kinase domain in the interval 777–1054 (LSDFSIIGEG…EIQKCKEEYE (278 aa)). ATP is bound by residues 783-791 (IGEGGFSTV) and Lys809. The Proton acceptor role is filled by Asp904.

The protein belongs to the protein kinase superfamily. Ser/Thr protein kinase family.

The catalysed reaction is L-seryl-[protein] + ATP = O-phospho-L-seryl-[protein] + ADP + H(+). It catalyses the reaction L-threonyl-[protein] + ATP = O-phospho-L-threonyl-[protein] + ADP + H(+). In Dictyostelium discoideum (Social amoeba), this protein is Probable serine/threonine-protein kinase DDB_G0283337.